A 30-amino-acid polypeptide reads, in one-letter code: Dermaseptin-3.1TR (30 aa).

Expressed by the skin glands.

The protein localises to the secreted. Has antimicrobial activity. The polypeptide is Dermaseptin-3.1TR (Phyllomedusa trinitatis (Trinidad leaf frog)).